Reading from the N-terminus, the 176-residue chain is uncharacterized protein (176 aa).

This is an uncharacterized protein from Caenorhabditis elegans.